The following is a 485-amino-acid chain: Cysteine--tRNA ligase (485 aa).

Position 27 (Cys-27) interacts with Zn(2+). A 'HIGH' region motif is present at residues 29-39 (ITAYDLCHIGH). Residues Cys-208, His-233, and Glu-237 each coordinate Zn(2+). Residues 265–269 (KMSKS) carry the 'KMSKS' region motif. Lys-268 is an ATP binding site.

Belongs to the class-I aminoacyl-tRNA synthetase family. In terms of assembly, monomer. The cofactor is Zn(2+).

Its subcellular location is the cytoplasm. The enzyme catalyses tRNA(Cys) + L-cysteine + ATP = L-cysteinyl-tRNA(Cys) + AMP + diphosphate. This Nitratidesulfovibrio vulgaris (strain DP4) (Desulfovibrio vulgaris) protein is Cysteine--tRNA ligase.